The sequence spans 199 residues: Probable GTP-binding protein EngB (199 aa).

Residues 22 to 196 enclose the EngB-type G domain; it reads NWPEFAFSGR…GKFILDLVDS (175 aa). Residues 30–37, 57–61, 75–78, 142–145, and 175–177 each bind GTP; these read GRSNVGKS, GRTQS, DLPG, TKVD, and FSA. 2 residues coordinate Mg(2+): S37 and T59.

The protein belongs to the TRAFAC class TrmE-Era-EngA-EngB-Septin-like GTPase superfamily. EngB GTPase family. Mg(2+) is required as a cofactor.

Necessary for normal cell division and for the maintenance of normal septation. This is Probable GTP-binding protein EngB from Halothermothrix orenii (strain H 168 / OCM 544 / DSM 9562).